A 370-amino-acid chain; its full sequence is Death-associated protein kinase 2 (370 aa).

The Protein kinase domain maps to 23-285 (YDIGEELGSG…IQEALRHPWI (263 aa)). Residues 29–37 (LGSGQFAIV) and lysine 52 each bind ATP. Aspartate 149 (proton acceptor) is an active-site residue. The segment at 287–354 (PVDTQQAMVR…RNCESDTEEN (68 aa)) is calmodulin-binding. The autoinhibitory domain stretch occupies residues 292 to 301 (QAMVRRESVV). At serine 299 the chain carries Phosphoserine. Serine 318 carries the phosphoserine; by autocatalysis modification. Serine 349 is subject to Phosphoserine. At threonine 369 the chain carries Phosphothreonine.

Belongs to the protein kinase superfamily. CAMK Ser/Thr protein kinase family. DAP kinase subfamily. Homodimer in its autoinhibited state. Active as monomer. Interacts with 14-3-3 proteins YWHAB, YWHAE, YWHAG, YWHAH, YWHAQ, YWHAZ and SFN; the interaction requires DAPK2 phosphorylation at Thr-369 and suppresses DAPK2 kinase activity and DAPK2-induced apoptosis. Mg(2+) is required as a cofactor. In terms of processing, autophosphorylation at Ser-318 inhibits its catalytic activity. Dephosphorylated at Ser-318 in response to activated Fas and TNF-alpha receptors. Expressed in peritubular interstitial cells of the renal cortex. Isoform 1 is found in the adult brain while isoform 2 is expressed in brains of embryos and young mice (at protein level).

The protein resides in the cytoplasm. The protein localises to the cytoplasmic vesicle. It is found in the autophagosome lumen. The catalysed reaction is L-seryl-[protein] + ATP = O-phospho-L-seryl-[protein] + ADP + H(+). It carries out the reaction L-threonyl-[protein] + ATP = O-phospho-L-threonyl-[protein] + ADP + H(+). Activated by Ca(2+)/calmodulin. Regulated by a double locking mechanism, involving autophosphorylation at Ser-318, calmodulin binding, and dimerization. In the inactive state, Ser-318 is phosphorylated, and the kinase is dimeric. Activation involves: dephosphorylation at Ser-318, release-of-autoinhibition mechanism where calmodulin binding induces a conformational change that relieves the steric block of the active site by the autoinhibitory domain, and generation of the monomeric active form of the kinase. Calcium/calmodulin-dependent serine/threonine kinase involved in multiple cellular signaling pathways that trigger cell survival, apoptosis, and autophagy. Capable of regulating both type I apoptotic and type II autophagic cell death signals. The former involves caspase activation, chromatin and mitochondrial condensation while the latter involves caspase-independent cell death in conjunction with accumulation of mature autophagic vesicles, plasma membrane blebs, and nuclear condensation without DNA degradation. Mediator of anoikis and a suppressor of beta-catenin-dependent anchorage-independent growth of malignant epithelial cells. May play a role in granulocytic maturation. Regulates granulocytes motility by controlling cell spreading and polarization. In Mus musculus (Mouse), this protein is Death-associated protein kinase 2 (Dapk2).